The primary structure comprises 227 residues: HTH-type transcriptional regulator ArcR (227 aa).

A nucleoside 3',5'-cyclic phosphate is bound at residue Val41–Asp130. One can recognise an HTH crp-type domain in the interval Lys156 to Lys227. The segment at residues Ile189–His208 is a DNA-binding region (H-T-H motif).

The protein resides in the cytoplasm. Positively regulates the expression of the arcABDCR operon under anaerobic conditions, thus playing an essential role in arginine catabolism. May also control the expression of genes encoding proteins which are involved in anaerobic metabolism. Can bind cyclic AMP. This is HTH-type transcriptional regulator ArcR (arcR) from Staphylococcus haemolyticus (strain JCSC1435).